A 111-amino-acid chain; its full sequence is Large ribosomal subunit protein uL22 (111 aa).

The protein belongs to the universal ribosomal protein uL22 family. Part of the 50S ribosomal subunit.

In terms of biological role, this protein binds specifically to 23S rRNA; its binding is stimulated by other ribosomal proteins, e.g. L4, L17, and L20. It is important during the early stages of 50S assembly. It makes multiple contacts with different domains of the 23S rRNA in the assembled 50S subunit and ribosome. Its function is as follows. The globular domain of the protein is located near the polypeptide exit tunnel on the outside of the subunit, while an extended beta-hairpin is found that lines the wall of the exit tunnel in the center of the 70S ribosome. This is Large ribosomal subunit protein uL22 from Chlamydia pneumoniae (Chlamydophila pneumoniae).